Reading from the N-terminus, the 370-residue chain is Peridinin-chlorophyll a-binding protein 1, chloroplastic (370 aa).

A chloroplast-targeting transit peptide spans 1-57 (MVRSGKKAVVLAAVAFCATSVVQKSHGFVPSPLRQRAAAAGAAAASAATMFAPAAFA). 2 tandem repeats follow at residues 58-220 (DEIG…VPSG) and 221-370 (DKIG…AAQR).

In terms of assembly, homotrimer.

The protein resides in the plastid. Its subcellular location is the chloroplast. In terms of biological role, water-soluble antenna for capture of solar energy in the blue-green range. Peridinin is an asymmetric carotenoid. This Amphidinium carterae (Dinoflagellate) protein is Peridinin-chlorophyll a-binding protein 1, chloroplastic.